The chain runs to 297 residues: Pyridoxal 5'-phosphate synthase subunit SNZ1 (297 aa).

Asp23 lines the D-ribose 5-phosphate pocket. Lys80 (schiff-base intermediate with D-ribose 5-phosphate) is an active-site residue. Residue Gly152 participates in D-ribose 5-phosphate binding. Arg164 is a D-glyceraldehyde 3-phosphate binding site. Residues Gly214 and 235-236 (GS) each bind D-ribose 5-phosphate.

This sequence belongs to the PdxS/SNZ family. Homohexamer. Interacts with AIM18.

The enzyme catalyses aldehydo-D-ribose 5-phosphate + D-glyceraldehyde 3-phosphate + L-glutamine = pyridoxal 5'-phosphate + L-glutamate + phosphate + 3 H2O + H(+). It participates in cofactor biosynthesis; pyridoxal 5'-phosphate biosynthesis. Its function is as follows. Catalyzes the formation of pyridoxal 5'-phosphate from ribose 5-phosphate (RBP), glyceraldehyde 3-phosphate (G3P) and ammonia. The ammonia is provided by a SNO isoform. Can also use ribulose 5-phosphate and dihydroxyacetone phosphate as substrates, resulting from enzyme-catalyzed isomerization of RBP and G3P, respectively. In Saccharomyces cerevisiae (strain ATCC 204508 / S288c) (Baker's yeast), this protein is Pyridoxal 5'-phosphate synthase subunit SNZ1 (SNZ1).